We begin with the raw amino-acid sequence, 306 residues long: UDP-3-O-acyl-N-acetylglucosamine deacetylase (306 aa).

Zn(2+)-binding residues include histidine 81, histidine 241, and aspartate 245. Histidine 268 (proton donor) is an active-site residue.

It belongs to the LpxC family. The cofactor is Zn(2+).

It carries out the reaction a UDP-3-O-[(3R)-3-hydroxyacyl]-N-acetyl-alpha-D-glucosamine + H2O = a UDP-3-O-[(3R)-3-hydroxyacyl]-alpha-D-glucosamine + acetate. The protein operates within glycolipid biosynthesis; lipid IV(A) biosynthesis; lipid IV(A) from (3R)-3-hydroxytetradecanoyl-[acyl-carrier-protein] and UDP-N-acetyl-alpha-D-glucosamine: step 2/6. Its function is as follows. Catalyzes the hydrolysis of UDP-3-O-myristoyl-N-acetylglucosamine to form UDP-3-O-myristoylglucosamine and acetate, the committed step in lipid A biosynthesis. The polypeptide is UDP-3-O-acyl-N-acetylglucosamine deacetylase (Hydrogenovibrio crunogenus (strain DSM 25203 / XCL-2) (Thiomicrospira crunogena)).